A 391-amino-acid chain; its full sequence is MAEKLIPSCRGQWFLPARVLREGFLRARPVAVDGGFKLTIGPLTVATRVWDWVYVHYNENATDWLRGMNPPFWEEPCDVLDFLPGVACVNEATFLTLKKKYGSYLHLFVPLRHTRGNIFFGFSPLSATGMAVLKIKTFHGGTQAPDRPGVPMEVYAWETAHFLDAAPKLIEWEVSGTRENRKSAQMVTFSECGLYGSMEGYFYRERATVDICATILADLTGKLLALIRKGIYHGDLKSENIIMMSRSGPGKLIDFEHSHGPGETMTSFWYPDRTFFWNPIGTEAYAPPERSRGRGRNAGVPGIVFQIGLIALNIMVERMERVFVNHTWIKGDGYRAHVLKVIKARGTLDLRGGARTLARVDELIGLVARCLERDPAMRPSLETLVDEFSKI.

Residues 109-391 (VPLRHTRGNI…ETLVDEFSKI (283 aa)) form the Protein kinase domain. Residue K134 participates in ATP binding. D235 serves as the catalytic Proton acceptor.

Belongs to the protein kinase superfamily. Ser/Thr protein kinase family.

It carries out the reaction L-seryl-[protein] + ATP = O-phospho-L-seryl-[protein] + ADP + H(+). The enzyme catalyses L-threonyl-[protein] + ATP = O-phospho-L-threonyl-[protein] + ADP + H(+). The chain is Protein kinase ORF14 (ORF14) from Ictalurid herpesvirus 1 (strain Auburn) (IcHV-1).